Here is a 255-residue protein sequence, read N- to C-terminus: uncharacterized protein (255 aa).

This is an uncharacterized protein from Methanocaldococcus jannaschii (strain ATCC 43067 / DSM 2661 / JAL-1 / JCM 10045 / NBRC 100440) (Methanococcus jannaschii).